The chain runs to 81 residues: Penaeidin-3c (81 aa).

Residues 1-19 form the signal peptide; sequence MRLVVCLVFLASFALVCQG. At Gln20 the chain carries Pyrrolidone carboxylic acid. 3 disulfide bridges follow: Cys50–Cys65, Cys54–Cys72, and Cys66–Cys73. A Serine amide modification is found at Ser80.

The protein belongs to the penaeidin family. Higher expression in hemocytes and to a lesser extent in heart, testis, gills, intestine, lymphoid organ and hepatopancreas. Traces in eyes and subcuticular epithelium. Not present in the brain.

It localises to the cytoplasmic granule. In terms of biological role, antibacterial activity against M.luteus and E.coli bacteria. Antifungal activity against N.crassa and F.oxysporum. Presents chitin-binding activity. The chain is Penaeidin-3c from Penaeus vannamei (Whiteleg shrimp).